Here is a 25-residue protein sequence, read N- to C-terminus: Non-specific lipid-transfer protein 3 (25 aa).

As to expression, seeds (at protein level).

Its function is as follows. Plant non-specific lipid-transfer proteins transfer phospholipids as well as galactolipids across membranes. May play a role in wax or cutin deposition in the cell walls of expanding epidermal cells and certain secretory tissues. Has antibacterial and antifungal activity. Displays antibacterial activity towards both Gram-negative bacteria, P.carotovorum (IC(50)=11.5 uM) and P.syringae (IC(50)=12.0 uM), and Gram-positive bacterium C.michiganensis subsp michiganense (IC(50)=11.2 uM). Also displays antifungal activity towards A.niger VKM F-33 (IC(50)=1.05 uM) and B.cinerea TSKHA (IC(50)=1.88 uM) and relatively moderate activity towards B.sorokiniana VKM F-1448 (IC(50)=1.55 uM). Displays some inhibitory activity towards P.infestans OSV12. In Nigella sativa (Black cumin), this protein is Non-specific lipid-transfer protein 3.